Consider the following 235-residue polypeptide: Adenosine 5'-phosphosulfate reductase (235 aa).

Residues cysteine 121, cysteine 122, cysteine 204, and cysteine 207 each contribute to the [4Fe-4S] cluster site. The Nucleophile; cysteine thiosulfonate intermediate role is filled by cysteine 230.

It belongs to the PAPS reductase family. CysH subfamily. Requires [4Fe-4S] cluster as cofactor.

It localises to the cytoplasm. It catalyses the reaction [thioredoxin]-disulfide + sulfite + AMP + 2 H(+) = adenosine 5'-phosphosulfate + [thioredoxin]-dithiol. Its pathway is sulfur metabolism; hydrogen sulfide biosynthesis; sulfite from sulfate. In terms of biological role, catalyzes the formation of sulfite from adenosine 5'-phosphosulfate (APS) using thioredoxin as an electron donor. The sequence is that of Adenosine 5'-phosphosulfate reductase from Geobacillus kaustophilus (strain HTA426).